A 392-amino-acid chain; its full sequence is Outer membrane protein assembly factor BamB (392 aa).

The N-terminal stretch at 1–19 (MQLRKLLLPGLLSVTLLSG) is a signal peptide. The N-palmitoyl cysteine moiety is linked to residue Cys-20. Cys-20 is lipidated: S-diacylglycerol cysteine.

Belongs to the BamB family. In terms of assembly, part of the Bam complex, which is composed of the outer membrane protein BamA, and four lipoproteins BamB, BamC, BamD and BamE.

Its subcellular location is the cell outer membrane. Functionally, part of the outer membrane protein assembly complex, which is involved in assembly and insertion of beta-barrel proteins into the outer membrane. The protein is Outer membrane protein assembly factor BamB of Shigella dysenteriae serotype 1 (strain Sd197).